Here is a 566-residue protein sequence, read N- to C-terminus: Urease subunit alpha (566 aa).

A Urease domain is found at 128-566 (GGIDTHIHFI…LPMAQRYFLF (439 aa)). Ni(2+) contacts are provided by histidine 133, histidine 135, and lysine 216. N6-carboxylysine is present on lysine 216. Residue histidine 218 coordinates substrate. Ni(2+) is bound by residues histidine 245 and histidine 271. Histidine 319 (proton donor) is an active-site residue. Residue aspartate 359 participates in Ni(2+) binding.

It belongs to the metallo-dependent hydrolases superfamily. Urease alpha subunit family. Heterotrimer of UreA (gamma), UreB (beta) and UreC (alpha) subunits. Three heterotrimers associate to form the active enzyme. Ni cation serves as cofactor. Carboxylation allows a single lysine to coordinate two nickel ions.

It is found in the cytoplasm. It carries out the reaction urea + 2 H2O + H(+) = hydrogencarbonate + 2 NH4(+). Its pathway is nitrogen metabolism; urea degradation; CO(2) and NH(3) from urea (urease route): step 1/1. The sequence is that of Urease subunit alpha from Pseudomonas fluorescens (strain Pf0-1).